The following is a 542-amino-acid chain: Nuclear hormone receptor family member nhr-35 (542 aa).

The segment at residues 74-149 (NSICHICSDV…SGMRDDQVQS (76 aa)) is a DNA-binding region (nuclear receptor). NR C4-type zinc fingers lie at residues 77–97 (CHIC…CNGC) and 113–137 (CRFE…FMKC). Residues 186–438 (EYDQLLESLL…VLMEELILAE (253 aa)) enclose the NR LBD domain. The disordered stretch occupies residues 445 to 487 (RQDQTPCSIMNDTPSGSQDMCSPCPEDLLRTSTSSNSPTNSSL). Polar residues predominate over residues 448-464 (QTPCSIMNDTPSGSQDM). A compositionally biased stretch (low complexity) spans 475-487 (TSTSSNSPTNSSL).

Belongs to the nuclear hormone receptor family.

The protein resides in the nucleus. Functionally, orphan nuclear receptor. The polypeptide is Nuclear hormone receptor family member nhr-35 (nhr-35) (Caenorhabditis elegans).